A 208-amino-acid chain; its full sequence is Urease accessory protein UreG 2 (208 aa).

16–23 (GPVGSGKT) provides a ligand contact to GTP.

The protein belongs to the SIMIBI class G3E GTPase family. UreG subfamily. In terms of assembly, homodimer. UreD, UreF and UreG form a complex that acts as a GTP-hydrolysis-dependent molecular chaperone, activating the urease apoprotein by helping to assemble the nickel containing metallocenter of UreC. The UreE protein probably delivers the nickel.

It localises to the cytoplasm. Functionally, facilitates the functional incorporation of the urease nickel metallocenter. This process requires GTP hydrolysis, probably effectuated by UreG. The polypeptide is Urease accessory protein UreG 2 (Methylobacterium radiotolerans (strain ATCC 27329 / DSM 1819 / JCM 2831 / NBRC 15690 / NCIMB 10815 / 0-1)).